The sequence spans 317 residues: Transcriptional regulator LsrR (317 aa).

Positions 33-56 (QSEISDRLGLTRLKVSRLLEKGHQ) form a DNA-binding region, H-T-H motif.

This sequence belongs to the SorC transcriptional regulatory family.

Its subcellular location is the cytoplasm. With respect to regulation, inactivated by phosphorylated autoinducer-2 (phospho-AI-2). Phospho-AI-2 acts by binding to LsrR, which is then unable to bind to the promoter regions, allowing the transcription of the target genes. In terms of biological role, transcriptional regulator that represses the expression of the lsr operon in the absence of the quorum-sensing signaling molecule autoinducer 2 (AI-2). It also represses the expression of the lsrRK operon. Acts by binding directly to the lsrA and lsrR promoter regions. In the presence of phosphorylated autoinducer-2 (phospho-AI-2), LsrR is inactivated, leading to the transcription of the genes. The protein is Transcriptional regulator LsrR (lsrR) of Escherichia coli (strain K12 / DH10B).